A 394-amino-acid chain; its full sequence is Ceramide glucosyltransferase-A (394 aa).

Over 1–10 the chain is Lumenal; sequence MAVLDLALQG. The chain crosses the membrane as a helical span at residues 11–32; that stretch reads LAIFGCVLFFVLWFMHFLSIVY. Residues 33–195 lie on the Cytoplasmic side of the membrane; that stretch reads TRLHLNKKIS…QVYFGTSHPR (163 aa). Position 92 (D92) is a short sequence motif, D1. D144 is a short sequence motif (D2). The chain crosses the membrane as a helical span at residues 196 to 215; the sequence is SYISANVTGFKCVTGMSCLM. Topologically, residues 216-287 are lumenal; that stretch reads RKEVLDQAGG…KLRINMLPAT (72 aa). A short sequence motif (D3) is located at residue D236. Catalysis depends on D236, which acts as the Proton acceptor. The short motif at 272–276 is the (Q/R)XXRW element; it reads RMIRW. A helical membrane pass occupies residues 288–304; it reads IICEPISECFVASLIIG. At 305–309 the chain is on the cytoplasmic side; it reads WAAHH. A helical membrane pass occupies residues 310-328; the sequence is IFRWDIMVFFMCHCLAWFI. The Lumenal segment spans residues 329-348; that stretch reads FDYIQLRGVQGGPLNFSKLD. Residues 349–369 traverse the membrane as a helical segment; the sequence is YAVAWFIRESMTIYIFLSALW. Residues 370–394 lie on the Cytoplasmic side of the membrane; that stretch reads DPTISWRTGRFRLRCGGTAEEILDV.

It belongs to the glycosyltransferase 2 family. As to expression, at the late gastrula stage, weakly expressed ubiquitously. As neurulation proceeds (stages 15-16), expression moves towards the dorsal structures: involuted paraxial mesoderm and neural folds. In the tailbud embryo (stage 28), expression is restricted to the notochord. At later stages (stage 35), expression remains in the notochord and also appears weakly in the cephalic region.

Its subcellular location is the golgi apparatus membrane. The enzyme catalyses an N-acylsphing-4-enine + UDP-alpha-D-glucose = a beta-D-glucosyl-(1&lt;-&gt;1')-N-acylsphing-4-enine + UDP + H(+). The catalysed reaction is UDP-alpha-D-xylose + an N-acylsphing-4-enine = a beta-D-xylosyl-(1&lt;-&gt;1')-N-acylsphing-4-enine + UDP + H(+). It catalyses the reaction N-(9Z-octadecenoyl)-sphing-4-enine + UDP-alpha-D-xylose = beta-D-xylosyl-(1&lt;-&gt;1')-N-(9Z-octadecenoyl)-sphing-4-enine + UDP + H(+). It functions in the pathway lipid metabolism; sphingolipid metabolism. Its function is as follows. Participates in the initial step of the glucosylceramide-based glycosphingolipid/GSL synthetic pathway at the cytosolic surface of the Golgi. Catalyzes the transfer of glucose from UDP-glucose to ceramide to produce glucosylceramide/GlcCer (such as beta-D-glucosyl-(1&lt;-&gt;1')-N-acylsphing-4-enine). Glucosylceramide is the core component of glycosphingolipids/GSLs, amphipathic molecules consisting of a ceramide lipid moiety embedded in the outer leaflet of the membrane, linked to one of hundreds of different externally oriented oligosaccharide structures. Glycosphingolipids are essential components of membrane microdomains that mediate membrane trafficking and signal transduction. They are implicated in many fundamental cellular processes, including growth, differentiation, migration, morphogenesis, cell-to-cell and cell-to-matrix interactions. Glycosphingolipids are required for convergence extension movements during early development. Catalyzes the synthesis of xylosylceramide/XylCer (such as beta-D-xylosyl-(1&lt;-&gt;1')-N-acylsphing-4-enine) using UDP-Xyl as xylose donor. The protein is Ceramide glucosyltransferase-A (ugcg-a) of Xenopus laevis (African clawed frog).